Reading from the N-terminus, the 476-residue chain is Nodulation protein NoeA (476 aa).

Not known; does not seem to participate in nod factor synthesis but required for nodulation on some specific Medicago species such as M.littoralis. This is Nodulation protein NoeA (noeA) from Rhizobium meliloti (strain 1021) (Ensifer meliloti).